Here is a 181-residue protein sequence, read N- to C-terminus: Protein GrpE (181 aa).

Residues 1–21 (MNKEQQDLQTEQEAAVETAEL) are disordered. Positions 8–21 (LQTEQEAAVETAEL) are enriched in low complexity.

It belongs to the GrpE family. In terms of assembly, homodimer.

Its subcellular location is the cytoplasm. Participates actively in the response to hyperosmotic and heat shock by preventing the aggregation of stress-denatured proteins, in association with DnaK and GrpE. It is the nucleotide exchange factor for DnaK and may function as a thermosensor. Unfolded proteins bind initially to DnaJ; upon interaction with the DnaJ-bound protein, DnaK hydrolyzes its bound ATP, resulting in the formation of a stable complex. GrpE releases ADP from DnaK; ATP binding to DnaK triggers the release of the substrate protein, thus completing the reaction cycle. Several rounds of ATP-dependent interactions between DnaJ, DnaK and GrpE are required for fully efficient folding. In Trichlorobacter lovleyi (strain ATCC BAA-1151 / DSM 17278 / SZ) (Geobacter lovleyi), this protein is Protein GrpE.